Consider the following 363-residue polypeptide: MSEAVTRIQVGGTAGSEPYEVLVGRQLLGELGGLIGAKAKRVAVIHPEALAETGDALRADLAAQGYEAIAIQVPNAEEAKTAEVAAYCWKALGQSGFTRTDVIVGVGGGASTDLAGFVAATWLRGVRWIAVPTTVLSMVDAAVGGKTGINTAEGKNLVGSFHPPAGVLCDLAALDSLPVNDYVSGLAEVIKAGFIADPAILDLIEADPQAARTPAGPHTAELIVRSIKVKAEVVSSDLKEAGLREILNYGHTLGHAIEKNERYKWRHGAAVSVGMHFAAELGRLAGRLDDATADRHRSILEAVGLPLHYRYDQWPKLVENMKVDKKSRGDLLRFIVLDGLAKPTVLEGPDPAVLLAAYGEVGE.

NAD(+) contacts are provided by residues 109 to 113 (GASTD), 133 to 134 (TT), lysine 146, and lysine 155. Zn(2+)-binding residues include glutamate 188, histidine 251, and histidine 267.

The protein belongs to the sugar phosphate cyclases superfamily. Dehydroquinate synthase family. It depends on NAD(+) as a cofactor. Co(2+) is required as a cofactor. Zn(2+) serves as cofactor.

It is found in the cytoplasm. It catalyses the reaction 7-phospho-2-dehydro-3-deoxy-D-arabino-heptonate = 3-dehydroquinate + phosphate. Its pathway is metabolic intermediate biosynthesis; chorismate biosynthesis; chorismate from D-erythrose 4-phosphate and phosphoenolpyruvate: step 2/7. Its function is as follows. Catalyzes the conversion of 3-deoxy-D-arabino-heptulosonate 7-phosphate (DAHP) to dehydroquinate (DHQ). This is 3-dehydroquinate synthase from Streptomyces coelicolor (strain ATCC BAA-471 / A3(2) / M145).